The primary structure comprises 188 residues: MKKIGVLAFQGGVIEHVKKIEELGHIPVLVKKNEDLEGIDGLILPGGESTTIGKFLIETGLKDKILSLAEQGMPMWGTCAGAILLSKSIKNQGSGVLPLLDIVIERNAYGSQIDSFRKEVFVPRFNKTTECVFIRAPKIVDVGSNVEVLAQLDTPIAVLQGTILATTFHPELTSQNYWHSFFVENMIK.

47–49 serves as a coordination point for L-glutamine; sequence GES. Cys-79 functions as the Nucleophile in the catalytic mechanism. L-glutamine contacts are provided by residues Arg-106 and 134–135; that span reads IR. Active-site charge relay system residues include His-169 and Glu-171.

It belongs to the glutaminase PdxT/SNO family. In terms of assembly, in the presence of PdxS, forms a dodecamer of heterodimers. Only shows activity in the heterodimer.

The enzyme catalyses aldehydo-D-ribose 5-phosphate + D-glyceraldehyde 3-phosphate + L-glutamine = pyridoxal 5'-phosphate + L-glutamate + phosphate + 3 H2O + H(+). It carries out the reaction L-glutamine + H2O = L-glutamate + NH4(+). It functions in the pathway cofactor biosynthesis; pyridoxal 5'-phosphate biosynthesis. Its function is as follows. Catalyzes the hydrolysis of glutamine to glutamate and ammonia as part of the biosynthesis of pyridoxal 5'-phosphate. The resulting ammonia molecule is channeled to the active site of PdxS. The chain is Pyridoxal 5'-phosphate synthase subunit PdxT from Caldicellulosiruptor saccharolyticus (strain ATCC 43494 / DSM 8903 / Tp8T 6331).